Here is a 68-residue protein sequence, read N- to C-terminus: DNA gyrase inhibitor YacG (68 aa).

The Zn(2+) site is built by Cys14, Cys17, Cys29, and Cys33.

Belongs to the DNA gyrase inhibitor YacG family. Interacts with GyrB. It depends on Zn(2+) as a cofactor.

Its function is as follows. Inhibits all the catalytic activities of DNA gyrase by preventing its interaction with DNA. Acts by binding directly to the C-terminal domain of GyrB, which probably disrupts DNA binding by the gyrase. The chain is DNA gyrase inhibitor YacG from Azorhizobium caulinodans (strain ATCC 43989 / DSM 5975 / JCM 20966 / LMG 6465 / NBRC 14845 / NCIMB 13405 / ORS 571).